A 306-amino-acid chain; its full sequence is Porphobilinogen deaminase (306 aa).

At Cys239 the chain carries S-(dipyrrolylmethanemethyl)cysteine.

This sequence belongs to the HMBS family. As to quaternary structure, monomer. Requires dipyrromethane as cofactor.

It catalyses the reaction 4 porphobilinogen + H2O = hydroxymethylbilane + 4 NH4(+). It functions in the pathway porphyrin-containing compound metabolism; protoporphyrin-IX biosynthesis; coproporphyrinogen-III from 5-aminolevulinate: step 2/4. Its function is as follows. Tetrapolymerization of the monopyrrole PBG into the hydroxymethylbilane pre-uroporphyrinogen in several discrete steps. This is Porphobilinogen deaminase (hemC) from Helicobacter pylori (strain J99 / ATCC 700824) (Campylobacter pylori J99).